A 406-amino-acid chain; its full sequence is MTFSVDKVRADFPVLSREVNGLPLAYLDSAASAQKPSQVIDAEAEFYRHGYAAVHRGIHTLSAQATEKMENVRKRASLFINARSAEELVFVRGTTEGINLVANSWGNSNVRAGDNIIISQMEHHANIVPWQMLCARVGAELRVIPLNPDGTLQLETLPTLFDEKTRLLAITHVSNVLGTENPLAEMITLAHQHGTKVLVDGAQAVMHHPVDVQALDCDFYVFSGHKLYGPTGIGILYVKEALLQEMPPWEGGGSMIATVSLSEGTTWTKAPWRFEAGTPNTGGIIGLGAALEYVSALGLNNIAEYEQNLMHYALSQLESVPDLTLYGPQNRLGVIAFNLGKHHAYDVGSFLDNYGIAVRTGHHCAMPLMAYYNVPAMCRASLAMYNTHEEVDRLVTGLQRIHRLLG.

Position 226 is an N6-(pyridoxal phosphate)lysine (Lys-226). Cys-364 functions as the Cysteine persulfide intermediate in the catalytic mechanism.

Belongs to the class-V pyridoxal-phosphate-dependent aminotransferase family. Csd subfamily. As to quaternary structure, homodimer. Interacts with SufE and the SufBCD complex composed of SufB, SufC and SufD. The interaction with SufE is required to mediate the direct transfer of the sulfur atom from the S-sulfanylcysteine. The cofactor is pyridoxal 5'-phosphate.

Its subcellular location is the cytoplasm. It carries out the reaction (sulfur carrier)-H + L-cysteine = (sulfur carrier)-SH + L-alanine. It catalyses the reaction L-selenocysteine + AH2 = hydrogenselenide + L-alanine + A + H(+). It functions in the pathway cofactor biosynthesis; iron-sulfur cluster biosynthesis. In terms of biological role, cysteine desulfurases mobilize the sulfur from L-cysteine to yield L-alanine, an essential step in sulfur metabolism for biosynthesis of a variety of sulfur-containing biomolecules. Component of the suf operon, which is activated and required under specific conditions such as oxidative stress and iron limitation. Acts as a potent selenocysteine lyase in vitro, that mobilizes selenium from L-selenocysteine. Selenocysteine lyase activity is however unsure in vivo. This is Cysteine desulfurase from Escherichia coli O17:K52:H18 (strain UMN026 / ExPEC).